A 201-amino-acid chain; its full sequence is Small ribosomal subunit protein uS4 (201 aa).

The S4 RNA-binding domain maps to 103–167 (RRLQTIVTKK…SKIPQVLEKT (65 aa)). The tract at residues 163 to 201 (VLEKTKSEAPAEETVEAPAEETVEAPAEEKKEESPSTES) is disordered. Residues 172–185 (PAEETVEAPAEETV) show a composition bias toward acidic residues. The span at 189 to 201 (AEEKKEESPSTES) shows a compositional bias: basic and acidic residues.

The protein belongs to the universal ribosomal protein uS4 family. As to quaternary structure, part of the 30S ribosomal subunit. Contacts protein S5. The interaction surface between S4 and S5 is involved in control of translational fidelity.

One of the primary rRNA binding proteins, it binds directly to 16S rRNA where it nucleates assembly of the body of the 30S subunit. Its function is as follows. With S5 and S12 plays an important role in translational accuracy. The protein is Small ribosomal subunit protein uS4 of Nitrosopumilus maritimus (strain SCM1).